Reading from the N-terminus, the 316-residue chain is UDP-N-acetyl-2-amino-2-deoxy-D-glucuronate oxidase (316 aa).

Residues 11-13 (GYI), 32-37 (YDINDS), glutamate 55, 81-84 (NYLH), 101-102 (EK), glutamine 130, and 171-172 (WK) each bind NAD(+).

This sequence belongs to the Gfo/Idh/MocA family. In terms of assembly, homotetramer.

The enzyme catalyses UDP-2-acetamido-2-deoxy-alpha-D-glucuronate + NAD(+) = UDP-2-acetamido-2-deoxy-alpha-D-ribo-hex-3-uluronate + NADH + H(+). It carries out the reaction 2-hydroxyglutarate + NAD(+) = 2-oxoglutarate + NADH + H(+). It participates in bacterial outer membrane biogenesis; LPS O-antigen biosynthesis. In terms of biological role, plays a role in the biosynthesis of B-band O antigen for serotype O5. Catalyzes the NAD-dependent oxidation of UDP-N-acetylglucosaminuronic acid (UDP-D-GlcNAcA) to UDP-2-acetamido-2-deoxy-3-oxo-D-glucuronic acid (UDP-3-oxo-D-GlcNAcA). Cannot use UDP-GlcNAc or UDP-GalNAc as the nucleotide sugar substrate, and can use only poorly UDP-D-glucuronic acid (UDP-GlcA). Undergoes an NAD(+) recycling mechanism using 2-oxoglutarate as an oxidant. In Pseudomonas aeruginosa (strain ATCC 15692 / DSM 22644 / CIP 104116 / JCM 14847 / LMG 12228 / 1C / PRS 101 / PAO1), this protein is UDP-N-acetyl-2-amino-2-deoxy-D-glucuronate oxidase.